The primary structure comprises 302 residues: N-acetylmuramic acid 6-phosphate etherase (302 aa).

Positions 58–221 (IGEAFLNGGR…STGAMVKTGK (164 aa)) constitute an SIS domain. Glutamate 86 acts as the Proton donor in catalysis. Residue glutamate 117 is part of the active site.

This sequence belongs to the GCKR-like family. MurNAc-6-P etherase subfamily. In terms of assembly, homodimer.

The catalysed reaction is N-acetyl-D-muramate 6-phosphate + H2O = N-acetyl-D-glucosamine 6-phosphate + (R)-lactate. It functions in the pathway amino-sugar metabolism; N-acetylmuramate degradation. Specifically catalyzes the cleavage of the D-lactyl ether substituent of MurNAc 6-phosphate, producing GlcNAc 6-phosphate and D-lactate. The sequence is that of N-acetylmuramic acid 6-phosphate etherase from Clostridium botulinum (strain Hall / ATCC 3502 / NCTC 13319 / Type A).